A 280-amino-acid chain; its full sequence is Transmembrane protein 45B (280 aa).

7 helical membrane-spanning segments follow: residues 7 to 27 (HALPGSFFLVFGLWWSVKYPL), 49 to 69 (LIEGILKAAFALIGILAEQFV), 96 to 116 (MYLFYGISGVVDILTFLPLNL), 120 to 140 (LDRLSLGIAVIIEGLLFYYHV), 150 to 170 (IHSLLLIAVFGGAISIMIEVF), 184 to 204 (LTILQGTWFWQIGFVLYPLGG), and 216 to 236 (VMFITMCFCWHYAVALLIMAI).

Belongs to the TMEM45 family.

It is found in the membrane. This Xenopus tropicalis (Western clawed frog) protein is Transmembrane protein 45B (tmem45b).